The following is a 735-amino-acid chain: Catalase-peroxidase (735 aa).

The segment at residues 97–220 (WHAAGTYRIG…LAAVQMGLIY (124 aa)) is a cross-link (tryptophyl-tyrosyl-methioninium (Trp-Tyr) (with M-246)). Histidine 98 (proton acceptor) is an active-site residue. The segment at residues 220–246 (YVNPEGPNGKPDPMAAAHDIRETFGRM) is a cross-link (tryptophyl-tyrosyl-methioninium (Tyr-Met) (with W-97)). Histidine 261 provides a ligand contact to heme b. The disordered stretch occupies residues 342 to 362 (AHQWTPKNPEAASTVPDAHDP).

Belongs to the peroxidase family. Peroxidase/catalase subfamily. In terms of assembly, homodimer or homotetramer. The cofactor is heme b. Formation of the three residue Trp-Tyr-Met cross-link is important for the catalase, but not the peroxidase activity of the enzyme.

It carries out the reaction H2O2 + AH2 = A + 2 H2O. It catalyses the reaction 2 H2O2 = O2 + 2 H2O. In terms of biological role, bifunctional enzyme with both catalase and broad-spectrum peroxidase activity. This chain is Catalase-peroxidase, found in Gloeobacter violaceus (strain ATCC 29082 / PCC 7421).